We begin with the raw amino-acid sequence, 242 residues long: Biosynthetic peptidoglycan transglycosylase (242 aa).

A helical membrane pass occupies residues 19–39; it reads LLLACAVLWGGGVALFSIVPV.

This sequence belongs to the glycosyltransferase 51 family.

The protein localises to the cell inner membrane. The catalysed reaction is [GlcNAc-(1-&gt;4)-Mur2Ac(oyl-L-Ala-gamma-D-Glu-L-Lys-D-Ala-D-Ala)](n)-di-trans,octa-cis-undecaprenyl diphosphate + beta-D-GlcNAc-(1-&gt;4)-Mur2Ac(oyl-L-Ala-gamma-D-Glu-L-Lys-D-Ala-D-Ala)-di-trans,octa-cis-undecaprenyl diphosphate = [GlcNAc-(1-&gt;4)-Mur2Ac(oyl-L-Ala-gamma-D-Glu-L-Lys-D-Ala-D-Ala)](n+1)-di-trans,octa-cis-undecaprenyl diphosphate + di-trans,octa-cis-undecaprenyl diphosphate + H(+). It functions in the pathway cell wall biogenesis; peptidoglycan biosynthesis. In terms of biological role, peptidoglycan polymerase that catalyzes glycan chain elongation from lipid-linked precursors. This Klebsiella oxytoca protein is Biosynthetic peptidoglycan transglycosylase.